We begin with the raw amino-acid sequence, 361 residues long: Phospho-N-acetylmuramoyl-pentapeptide-transferase (361 aa).

Helical transmembrane passes span G27 to L47, T72 to A92, L94 to F114, A133 to G153, L169 to G189, G200 to S220, V237 to F257, I264 to A284, I289 to V309, and Q338 to L358.

It belongs to the glycosyltransferase 4 family. MraY subfamily. It depends on Mg(2+) as a cofactor.

Its subcellular location is the cell inner membrane. The enzyme catalyses UDP-N-acetyl-alpha-D-muramoyl-L-alanyl-gamma-D-glutamyl-meso-2,6-diaminopimeloyl-D-alanyl-D-alanine + di-trans,octa-cis-undecaprenyl phosphate = di-trans,octa-cis-undecaprenyl diphospho-N-acetyl-alpha-D-muramoyl-L-alanyl-D-glutamyl-meso-2,6-diaminopimeloyl-D-alanyl-D-alanine + UMP. It functions in the pathway cell wall biogenesis; peptidoglycan biosynthesis. Its function is as follows. Catalyzes the initial step of the lipid cycle reactions in the biosynthesis of the cell wall peptidoglycan: transfers peptidoglycan precursor phospho-MurNAc-pentapeptide from UDP-MurNAc-pentapeptide onto the lipid carrier undecaprenyl phosphate, yielding undecaprenyl-pyrophosphoryl-MurNAc-pentapeptide, known as lipid I. The sequence is that of Phospho-N-acetylmuramoyl-pentapeptide-transferase from Azorhizobium caulinodans (strain ATCC 43989 / DSM 5975 / JCM 20966 / LMG 6465 / NBRC 14845 / NCIMB 13405 / ORS 571).